The following is a 242-amino-acid chain: Ribosomal RNA small subunit methyltransferase G (242 aa).

S-adenosyl-L-methionine-binding positions include Gly78, Leu83, 130 to 131 (AE), and Arg151.

Belongs to the methyltransferase superfamily. RNA methyltransferase RsmG family.

It localises to the cytoplasm. Functionally, specifically methylates the N7 position of guanine in position 518 of 16S rRNA. The sequence is that of Ribosomal RNA small subunit methyltransferase G from Salinispora arenicola (strain CNS-205).